The primary structure comprises 404 residues: MEEREGTNINNNITSSFGLKQQHEAAASDGGYSMDPPPRPENPNPFLVPPTTVPAAATVAAAVTENAATPFSLTMPTENTSAEQLKKKRGRPRKYNPDGTLVVTLSPMPISSSVPLTSEFPPRKRGRGRGKSNRWLKKSQMFQFDRSPVDTNLAGVGTADFVGANFTPHVLIVNAGEDVTMKIMTFSQQGSRAICILSANGPISNVTLRQSMTSGGTLTYEGRFEILSLTGSFMQNDSGGTRSRAGGMSVCLAGPDGRVFGGGLAGLFLAAGPVQVMVGTFIAGQEQSQLELAKERRLRFGAQPSSISFNISAEERKARFERLNKSVAIPAPTTSYTHVNTTNAVHSYYTNSVNHVKDPFSSIPVGGGGGGEVGEEEGEEDDDELEGEDEEFGGDSQSDNEIPS.

Disordered regions lie at residues 1 to 51 (MEER…VPPT), 70 to 100 (PFSL…PDGT), and 113 to 133 (SVPL…GKSN). A compositionally biased stretch (polar residues) spans 7 to 19 (TNINNNITSSFGL). Residues 35–51 (DPPPRPENPNPFLVPPT) are compositionally biased toward pro residues. The segment covering 71–83 (FSLTMPTENTSAE) has biased composition (polar residues). The Bipartite nuclear localization signal motif lies at 86–94 (KKKRGRPRK). Positions 86 to 98 (KKKRGRPRKYNPD) form a DNA-binding region, a.T hook. Over residues 123 to 133 (RKRGRGRGKSN) the composition is skewed to basic residues. The region spanning 163–308 (GANFTPHVLI…RFGAQPSSIS (146 aa)) is the PPC domain. The interval 359-404 (PFSSIPVGGGGGGEVGEEEGEEDDDELEGEDEEFGGDSQSDNEIPS) is disordered. A compositionally biased stretch (acidic residues) spans 373–393 (VGEEEGEEDDDELEGEDEEFG).

In terms of assembly, homodimer. Interacts with AHL4. As to expression, expressed in both procambium and xylem precursors of the root meristem. Also detected in the endodermis in the late elongation zone and onwards.

The protein localises to the nucleus. Functionally, transcription factor that specifically binds AT-rich DNA sequences related to the nuclear matrix attachment regions (MARs). Acts redundantly with AHL4 to regulate the formation of tissue boundary between the xylem and procambium in the root meristem. This chain is AT-hook motif nuclear-localized protein 3, found in Arabidopsis thaliana (Mouse-ear cress).